Here is a 1426-residue protein sequence, read N- to C-terminus: MAAASNGSEYFEFDVETGRESFARPSNAETVEQDEEDLRWAAIGRLPSQRQGTHNAILRRSQTQTQTSGYADGNVVQTIDVKKLDRADREMLVRQALATSDQDNFKLLSAIKERLDRVGMEVPKIEVRFENLNIEADVQAGTRALPTLVNVSRDFFERCLSSLRIIKPRKHKLNILKDISGIIKPGRMTLLLGPPGSGKSTLLLALAGKLDKSLKKTGNITYNGENLNKFHVKRTSAYISQTDNHIAELTVRETLDFAARCQGASEGFAGYMKDLTRLEKERGIRPSSEIDAFMKAASVKGEKHSVSTDYVLKVLGLDVCSDTMVGNDMMRGVSGGQRKRVTTGEMTVGPRKTLFMDEISTGLDSSTTFQIVKCIRNFVHLMDATVLMALLQPAPETFDLFDDLILLSEGYMVYQGPREDVIAFFESLGFRLPPRKGVADFLQEVTSKKDQAQYWADPSKPYQFIPVSDIAAAFRNSKYGHAADSKLAAPFDKKSADPSALCRTKFAISGWENLKVCFVRELLLIKRHKFLYTFRTCQVGFVGLVTATVFLKTRLHPTSEQFGNEYLSCLFFGLVHMMFNGFSELPLMISRLPVFYKQRDNSFHPAWSWSIASWLLRVPYSVLEAVVWSGVVYFTVGLAPSAGRFFRYMLLLFSVHQMALGLFRMMASLARDMVIANTFGSAAILIVFLLGGFVIPKADIKPWWVWGFWVSPLSYGQRAIAVNEFTATRWMTPSAISDTTIGLNLLKLRSFPTNDYWYWIGIAVLIGYAILFNNVVTLALAYLNPLRKARAVVLDDPNEETALVADANQVISEKKGMILPFKPLTMTFHNVNYYVDMPKEMRSQGVPETRLQLLSNVSGVFSPGVLTALVGSSGAGKTTLMDVLAGRKTGGYTEGDIRISGHPKEQQTFARISGYVEQNDIHSPQVTVEESLWFSASLRLPKEITKEQKKEFVEQVMRLVELDTLRYALVGLPGTTGLSTEQRKRLTIAVELVANPSIIFMDEPTSGLDARAAAIVMRTVRNTVDTGRTVVCTIHQPSIDIFEAFDELLLMKRGGQVIYGGKLGTHSQVLVDYFQGINGVPPISSGYNPATWMLEVTTPALEEKYNMEFADLYKKSDQFREVEANIKQLSVPPEGSEPISFTSRYSQNQLSQFLLCLWKQNLVYWRSPEYNLVRLVFTTIAAFILGTVFWDIGSKRTSSQDLITVMGALYSACLFLGVSNASSVQPIVSIERTVFYREKAAGMYAPIPYAAAQGLVEIPYILTQTILYGVITYFTIGFERTFSKFVLYLVFMFLTFTYFTFYGMMAVGLTPNQHLAAVISSAFYSLWNLLSGFLVQKPLIPVWWIWFYYICPVAWTLQGVILSQLGDVESMINEPLFHGTVKEFIEYYFGYKPNMIGVSAAVLVGFCALFFSAFALSVKYLNFQRR.

2 N-linked (GlcNAc...) asparagine glycosylation sites follow: Asn6 and Asn150. Positions 160-434 constitute an ABC transporter 1 domain; the sequence is LSSLRIIKPR…FESLGFRLPP (275 aa). 193 to 200 contributes to the ATP binding site; the sequence is GPPGSGKS. A glycan (N-linked (GlcNAc...) asparagine) is linked at Asn219. Phosphothreonine is present on Thr276. The ABC transmembrane type-2 1 domain occupies 512–725; sequence ENLKVCFVRE…GQRAIAVNEF (214 aa). 6 helical membrane passes run 530–550, 569–589, 618–638, 649–669, 675–695, and 760–780; these read FLYT…ATVF, CLFF…PLMI, VPYS…TVGL, MLLL…MASL, IANT…GFVI, and IGIA…TLAL. Residues 826–1078 form the ABC transporter 2 domain; the sequence is MTFHNVNYYV…VLVDYFQGIN (253 aa). Asn856 carries an N-linked (GlcNAc...) asparagine glycan. 871–878 serves as a coordination point for ATP; that stretch reads GSSGAGKT. The region spanning 1151–1365 is the ABC transmembrane type-2 2 domain; sequence SQFLLCLWKQ…TLQGVILSQL (215 aa). 7 consecutive transmembrane segments (helical) span residues 1172–1192, 1202–1222, 1258–1278, 1285–1305, 1315–1335, 1342–1362, and 1396–1416; these read LVRL…FWDI, LITV…SNAS, IPYI…TIGF, FVLY…YGMM, LAAV…GFLV, VWWI…GVIL, and IGVS…AFAL.

This sequence belongs to the ABC transporter superfamily. ABCG family. PDR (TC 3.A.1.205) subfamily. Expressed in seedlings, stems, leaves, siliques and inflorescence. In seeds, confined to the endosperm. Highly expressed in the tapetum of anthers.

It is found in the cell membrane. It carries out the reaction abscisate(in) + ATP + H2O = abscisate(out) + ADP + phosphate + H(+). Together with ABCG25, export abscisic acid (ABA) from the endosperm to deliver it to the embryo via ABCG30 and ABCG40-mediated import to suppress radicle extension and subsequent embryonic growth. Together with ABCG9, involved in pollen coat deposition of steryl glycosides required for pollen fitness. May be a general defense protein. The chain is ABC transporter G family member 31 from Arabidopsis thaliana (Mouse-ear cress).